The chain runs to 148 residues: Macrodomain Ter protein (148 aa).

The protein belongs to the MatP family. Homodimer.

It localises to the cytoplasm. In terms of biological role, required for spatial organization of the terminus region of the chromosome (Ter macrodomain) during the cell cycle. Prevents early segregation of duplicated Ter macrodomains during cell division. Binds specifically to matS, which is a 13 bp signature motif repeated within the Ter macrodomain. This chain is Macrodomain Ter protein, found in Haemophilus influenzae (strain ATCC 51907 / DSM 11121 / KW20 / Rd).